A 217-amino-acid polypeptide reads, in one-letter code: 3,4-dihydroxy-2-butanone 4-phosphate synthase (217 aa).

D-ribulose 5-phosphate-binding positions include 37–38 (RE), aspartate 42, 150–154 (RGGHT), and glutamate 174. Residue glutamate 38 participates in Mg(2+) binding. Mg(2+) is bound at residue histidine 153.

It belongs to the DHBP synthase family. As to quaternary structure, homodimer. Mg(2+) serves as cofactor. Mn(2+) is required as a cofactor.

It catalyses the reaction D-ribulose 5-phosphate = (2S)-2-hydroxy-3-oxobutyl phosphate + formate + H(+). It participates in cofactor biosynthesis; riboflavin biosynthesis; 2-hydroxy-3-oxobutyl phosphate from D-ribulose 5-phosphate: step 1/1. In terms of biological role, catalyzes the conversion of D-ribulose 5-phosphate to formate and 3,4-dihydroxy-2-butanone 4-phosphate. This Pectobacterium atrosepticum (strain SCRI 1043 / ATCC BAA-672) (Erwinia carotovora subsp. atroseptica) protein is 3,4-dihydroxy-2-butanone 4-phosphate synthase.